We begin with the raw amino-acid sequence, 387 residues long: Succinate--CoA ligase [ADP-forming] subunit beta (387 aa).

One can recognise an ATP-grasp domain in the interval 9–236; it reads KELFAKHNVP…RAATDPLELK (228 aa). ATP is bound by residues K45, 52–54, S94, and E99; that span reads GRG. Mg(2+)-binding residues include N191 and D205. Substrate-binding positions include N256 and 318 to 320; that span reads GIT.

The protein belongs to the succinate/malate CoA ligase beta subunit family. In terms of assembly, heterotetramer of two alpha and two beta subunits. Mg(2+) is required as a cofactor.

It carries out the reaction succinate + ATP + CoA = succinyl-CoA + ADP + phosphate. The enzyme catalyses GTP + succinate + CoA = succinyl-CoA + GDP + phosphate. It functions in the pathway carbohydrate metabolism; tricarboxylic acid cycle; succinate from succinyl-CoA (ligase route): step 1/1. Functionally, succinyl-CoA synthetase functions in the citric acid cycle (TCA), coupling the hydrolysis of succinyl-CoA to the synthesis of either ATP or GTP and thus represents the only step of substrate-level phosphorylation in the TCA. The beta subunit provides nucleotide specificity of the enzyme and binds the substrate succinate, while the binding sites for coenzyme A and phosphate are found in the alpha subunit. The sequence is that of Succinate--CoA ligase [ADP-forming] subunit beta from Mycobacterium tuberculosis (strain CDC 1551 / Oshkosh).